The chain runs to 452 residues: MGKYFGTDGVRGEANVELTPEMAFKLGRFGGYVLSQHELETPKVYVGRDTRISGQMLASSLISGLLSVGIEVYDLGVIATPGVAYLVKKDGASAGVMISASHNPALDNGIKFFGGDGYKLEDEKELEIEALIDAKEDTLPRPSAQGLGMLHDYIEGVRKYQAFLKTTAEGDFEGYNVVLDTANGASYTSARAVFADLKANLTVIGENPDGLNINVKVGSTHPEAMAKKVVETGSDLGLAFDGDADRLIAVDENGEIVDGDKIMFIVGKYLLEQGKLAQDTLVTTVMSNLGFHLALEEAGINSVITAVGDRYVVEEMKKNNYNFGGEQSGHMIFLDYNTTGDGQLSAIQLLKVMRETGKTLSELASEVTIYPQKLVNVRVKDNAAKKSAMDVPAIQKVISEMETSMNGKGRILVRPSGTEPLLRVMAEAPTHEQVEHVVDTIVEVVEAEIGVK.

Ser101 acts as the Phosphoserine intermediate in catalysis. Mg(2+) contacts are provided by Ser101, Asp241, Asp243, and Asp245. A Phosphoserine modification is found at Ser101.

The protein belongs to the phosphohexose mutase family. The cofactor is Mg(2+). In terms of processing, activated by phosphorylation.

It carries out the reaction alpha-D-glucosamine 1-phosphate = D-glucosamine 6-phosphate. Functionally, catalyzes the conversion of glucosamine-6-phosphate to glucosamine-1-phosphate. In Lactococcus lactis subsp. cremoris (strain SK11), this protein is Phosphoglucosamine mutase.